A 425-amino-acid chain; its full sequence is Serine--tRNA ligase (425 aa).

An L-serine-binding site is contributed by 232–234; sequence TSE. ATP contacts are provided by residues 263–265 and valine 279; that span reads RRE. Residue glutamate 286 coordinates L-serine. 350–353 serves as a coordination point for ATP; sequence EVVS. Threonine 387 contributes to the L-serine binding site.

Belongs to the class-II aminoacyl-tRNA synthetase family. Type-1 seryl-tRNA synthetase subfamily. Homodimer. The tRNA molecule binds across the dimer.

Its subcellular location is the cytoplasm. The enzyme catalyses tRNA(Ser) + L-serine + ATP = L-seryl-tRNA(Ser) + AMP + diphosphate + H(+). The catalysed reaction is tRNA(Sec) + L-serine + ATP = L-seryl-tRNA(Sec) + AMP + diphosphate + H(+). It functions in the pathway aminoacyl-tRNA biosynthesis; selenocysteinyl-tRNA(Sec) biosynthesis; L-seryl-tRNA(Sec) from L-serine and tRNA(Sec): step 1/1. Its function is as follows. Catalyzes the attachment of serine to tRNA(Ser). Is also able to aminoacylate tRNA(Sec) with serine, to form the misacylated tRNA L-seryl-tRNA(Sec), which will be further converted into selenocysteinyl-tRNA(Sec). This chain is Serine--tRNA ligase, found in Methanospirillum hungatei JF-1 (strain ATCC 27890 / DSM 864 / NBRC 100397 / JF-1).